The sequence spans 55 residues: Sec-independent protein translocase protein TatA (55 aa).

The helical transmembrane segment at 1-21 (MSLGPWQLFLVLIIILVLFGA) threads the bilayer.

It belongs to the TatA/E family. In terms of assembly, the Tat system comprises two distinct complexes: a TatABC complex, containing multiple copies of TatA, TatB and TatC subunits, and a separate TatA complex, containing only TatA subunits. Substrates initially bind to the TatABC complex, which probably triggers association of the separate TatA complex to form the active translocon.

It is found in the cell membrane. Functionally, part of the twin-arginine translocation (Tat) system that transports large folded proteins containing a characteristic twin-arginine motif in their signal peptide across membranes. TatA could form the protein-conducting channel of the Tat system. This Wolbachia pipientis wMel protein is Sec-independent protein translocase protein TatA.